The sequence spans 203 residues: E3 ubiquitin-protein ligase RNF152 (203 aa).

An RING-type zinc finger spans residues 12-55 (CQICFNYYSPRRRPKLLDCKHTCCSVCLQQMRTSQKDVRCPWCR). Positions 106-165 (ISKERTLLPGDMGCRLLPGSQQKSLTVVTIPAEQQPLQGGAPPEAVEEEPDRRGVVKSST) are necessary for interaction with RRAGA. The disordered stretch occupies residues 139–158 (QQPLQGGAPPEAVEEEPDRR). Residues 167–187 (SGVCTVILVACVLVFLLGIVL) traverse the membrane as a helical segment.

It belongs to the RNF152 family. As to quaternary structure, interacts with RRAGA (inactive GDP-bound form); stimulated by amino acid starvation. Interacts with SEC16A. In terms of processing, ubiquitinated. Autoubiquitinated in vitro, leading to its degradation by the proteasome.

Its subcellular location is the lysosome membrane. It catalyses the reaction S-ubiquitinyl-[E2 ubiquitin-conjugating enzyme]-L-cysteine + [acceptor protein]-L-lysine = [E2 ubiquitin-conjugating enzyme]-L-cysteine + N(6)-ubiquitinyl-[acceptor protein]-L-lysine.. Its pathway is protein modification; protein ubiquitination. Functionally, E3 ubiquitin-protein ligase that acts as a negative regulator of mTORC1 signaling by mediating ubiquitination of RagA/RRAGA and RHEB. Catalyzes 'Lys-63'-linked polyubiquitination of RagA/RRAGA in response to amino acid starvation, thereby regulating mTORC1 signaling. Also mediates monoubiquitination of RHEB, promoting its association with the TSC-TBC complex and subsequent inhibition. Also mediates 'Lys-48'-linked polyubiquitination of target proteins and their subsequent targeting to the proteasome for degradation. Induces apoptosis when overexpressed. In Mus musculus (Mouse), this protein is E3 ubiquitin-protein ligase RNF152.